Here is a 501-residue protein sequence, read N- to C-terminus: Inactive cytidine monophosphate-N-acetylneuraminic acid hydroxylase (501 aa).

Belongs to the CMP-Neu5Ac hydroxylase family. Widely expressed. Highly expressed in thymus. Not expressed in brain. May be expressed in adult stem cells (at protein level).

It localises to the cytoplasm. Functionally, sialic acids are components of carbohydrate chains of glycoconjugates and are involved in cell-cell recognition and cell-pathogen interactions. That protein has no CMP-N-acetylneuraminate monooxygenase activity and is not able to convert CMP-N-acetylneuraminic acid (CMP-Neu5Ac) into its hydroxylated derivative CMP-N-glycolylneuraminic acid (CMP-Neu5Gc), a sialic acid abundantly expressed at the surface of many cells in vertebrates. However, it may play a role in Wnt signaling. The sequence is that of Inactive cytidine monophosphate-N-acetylneuraminic acid hydroxylase (CMAHP) from Homo sapiens (Human).